We begin with the raw amino-acid sequence, 314 residues long: Lipoyl synthase (314 aa).

Positions 61, 66, 72, 87, 91, 94, and 301 each coordinate [4Fe-4S] cluster. The region spanning 73 to 290 (FGRGTATFMI…ERIATNLGFS (218 aa)) is the Radical SAM core domain.

Belongs to the radical SAM superfamily. Lipoyl synthase family. It depends on [4Fe-4S] cluster as a cofactor.

Its subcellular location is the cytoplasm. The catalysed reaction is [[Fe-S] cluster scaffold protein carrying a second [4Fe-4S](2+) cluster] + N(6)-octanoyl-L-lysyl-[protein] + 2 oxidized [2Fe-2S]-[ferredoxin] + 2 S-adenosyl-L-methionine + 4 H(+) = [[Fe-S] cluster scaffold protein] + N(6)-[(R)-dihydrolipoyl]-L-lysyl-[protein] + 4 Fe(3+) + 2 hydrogen sulfide + 2 5'-deoxyadenosine + 2 L-methionine + 2 reduced [2Fe-2S]-[ferredoxin]. It functions in the pathway protein modification; protein lipoylation via endogenous pathway; protein N(6)-(lipoyl)lysine from octanoyl-[acyl-carrier-protein]: step 2/2. Catalyzes the radical-mediated insertion of two sulfur atoms into the C-6 and C-8 positions of the octanoyl moiety bound to the lipoyl domains of lipoate-dependent enzymes, thereby converting the octanoylated domains into lipoylated derivatives. In Nitrosomonas eutropha (strain DSM 101675 / C91 / Nm57), this protein is Lipoyl synthase.